Consider the following 392-residue polypeptide: uncharacterized protein (392 aa).

This sequence belongs to the glycosyltransferase 2 family.

This is an uncharacterized protein from Bacillus subtilis (strain 168).